Here is a 387-residue protein sequence, read N- to C-terminus: Thermostable celloxylanase (387 aa).

Positions 41–382 (AEDIPSLAEA…KPAFWAIVDP (342 aa)) constitute a GH10 domain. Residue Glu185 is the Proton donor of the active site. Glu293 acts as the Nucleophile in catalysis.

Belongs to the glycosyl hydrolase 10 (cellulase F) family.

It catalyses the reaction Endohydrolysis of (1-&gt;4)-beta-D-glucosidic linkages in cellulose, lichenin and cereal beta-D-glucans.. The enzyme catalyses Endohydrolysis of (1-&gt;4)-beta-D-xylosidic linkages in xylans.. It functions in the pathway glycan degradation; xylan degradation. In terms of biological role, active toward xylan, carboxymethylcellulose, P-nitrophenyl-beta-D-xylopyranoside and P-nitrophenyl-beta-D-cellobioside. The sequence is that of Thermostable celloxylanase (xynB) from Thermoclostridium stercorarium (Clostridium stercorarium).